Reading from the N-terminus, the 283-residue chain is Elongation factor Ts (283 aa).

The involved in Mg(2+) ion dislocation from EF-Tu stretch occupies residues 80–83; that stretch reads TDFV.

The protein belongs to the EF-Ts family.

It localises to the cytoplasm. Its function is as follows. Associates with the EF-Tu.GDP complex and induces the exchange of GDP to GTP. It remains bound to the aminoacyl-tRNA.EF-Tu.GTP complex up to the GTP hydrolysis stage on the ribosome. The protein is Elongation factor Ts of Actinobacillus pleuropneumoniae serotype 3 (strain JL03).